A 78-amino-acid polypeptide reads, in one-letter code: DNA-directed RNA polymerase subunit Rpo5 (78 aa).

It belongs to the archaeal Rpo5/eukaryotic RPB5 RNA polymerase subunit family. As to quaternary structure, part of the RNA polymerase complex.

The protein resides in the cytoplasm. It carries out the reaction RNA(n) + a ribonucleoside 5'-triphosphate = RNA(n+1) + diphosphate. Its function is as follows. DNA-dependent RNA polymerase (RNAP) catalyzes the transcription of DNA into RNA using the four ribonucleoside triphosphates as substrates. This chain is DNA-directed RNA polymerase subunit Rpo5, found in Methanocaldococcus jannaschii (strain ATCC 43067 / DSM 2661 / JAL-1 / JCM 10045 / NBRC 100440) (Methanococcus jannaschii).